Here is a 499-residue protein sequence, read N- to C-terminus: Lysine--tRNA ligase (499 aa).

Positions 408 and 415 each coordinate Mg(2+).

This sequence belongs to the class-II aminoacyl-tRNA synthetase family. As to quaternary structure, homodimer. Mg(2+) is required as a cofactor.

The protein localises to the cytoplasm. It catalyses the reaction tRNA(Lys) + L-lysine + ATP = L-lysyl-tRNA(Lys) + AMP + diphosphate. This Bacillus cereus (strain ATCC 10987 / NRS 248) protein is Lysine--tRNA ligase.